The sequence spans 636 residues: Threonine--tRNA ligase (636 aa).

Residues Met-1 to Thr-63 form the TGS domain. The catalytic stretch occupies residues Asp-243–Pro-534. The Zn(2+) site is built by Cys-335, His-386, and His-511.

Belongs to the class-II aminoacyl-tRNA synthetase family. As to quaternary structure, homodimer. Zn(2+) serves as cofactor.

It is found in the cytoplasm. It carries out the reaction tRNA(Thr) + L-threonine + ATP = L-threonyl-tRNA(Thr) + AMP + diphosphate + H(+). In terms of biological role, catalyzes the attachment of threonine to tRNA(Thr) in a two-step reaction: L-threonine is first activated by ATP to form Thr-AMP and then transferred to the acceptor end of tRNA(Thr). Also edits incorrectly charged L-seryl-tRNA(Thr). In Pelobacter propionicus (strain DSM 2379 / NBRC 103807 / OttBd1), this protein is Threonine--tRNA ligase.